Consider the following 289-residue polypeptide: MSTYLIGDIHGCLDELLALLAQVNFDPQQDTLWLTGDLVARGPASLDVLRYVRSLGPAVRMVLGNHDLHLLAVYAGISRNKPKDRITPLLDAPDADELINWLRRQPVLQVDDQLKLIMAHAGITPQWDIETAKMCAREVEAVLSSDSYPLFLDAMYGDMPNNWSPELTGLARLRFSTNALTRMRFCFPNGQLDMICKDTPENAPAPLKPWFDLPRLVDPEYSIIFGHWASLEGKGVPEGIYGLDTGCCWGGDLTLLRWEDKRYFTQRAFKAEAEINNNNGFAAGEEVQH.

It belongs to the Ap4A hydrolase family.

It carries out the reaction P(1),P(4)-bis(5'-adenosyl) tetraphosphate + H2O = 2 ADP + 2 H(+). In terms of biological role, hydrolyzes diadenosine 5',5'''-P1,P4-tetraphosphate to yield ADP. The protein is Bis(5'-nucleosyl)-tetraphosphatase, symmetrical of Yersinia pseudotuberculosis serotype IB (strain PB1/+).